The chain runs to 44 residues: Photosystem I reaction center subunit IX (44 aa).

Residues 7–27 traverse the membrane as a helical segment; the sequence is YLSVAPVLTTLWFGSLAGLLI.

It belongs to the PsaJ family.

Its subcellular location is the plastid. It is found in the chloroplast thylakoid membrane. May help in the organization of the PsaE and PsaF subunits. This Drimys granadensis protein is Photosystem I reaction center subunit IX.